Consider the following 447-residue polypeptide: NAC domain containing protein 50 (447 aa).

Residues 1 to 21 (MGRESLAVVSSPPSATAPSTA) form a disordered region. Residues 27–178 (LAPGFRFHPT…AYVLCRVFHK (152 aa)) enclose the NAC domain. Residues 126 to 184 (LGMKKTLVFHSGRAPDGLRTNWVMHEYRLVEYETETNGSLLQDAYVLCRVFHKNNIGPP) mediate DNA binding. Disordered regions lie at residues 246–303 (DATP…NKEA) and 371–392 (KENQQKEETSPPSPIASPEEKV). Basic and acidic residues predominate over residues 281–293 (TLKREHAEEDERP). A coiled-coil region spans residues 392–447 (VNDLQKEVHQMSVERETFKLEMMSAEAMISILQSRIDALRQENEELKKKNASGQAS).

In terms of assembly, interacts with JMJ14 and NAC052. In terms of tissue distribution, mostly expressed in floral organs, and, at low levels, in other organs.

It localises to the nucleus. In terms of biological role, transcriptional repressor that binds to the motif 5'-(C/T)A(C/A)G-3' in the promoter of target genes. Also binds to the 5'-CTTGNNNNNCAAG-3' consensus sequence in chromatin. Can bind to the mitochondrial dysfunction motif (MDM) present in the upstream regions of mitochondrial dysfunction stimulon (MDS) genes involved in mitochondrial retrograde regulation (MRR). Together with NAC051/NAC052 and JMJ14, regulates gene expression and flowering time by associating with the histone demethylase JMJ14, probably by the promotion of RNA-mediated gene silencing. The sequence is that of NAC domain containing protein 50 from Arabidopsis thaliana (Mouse-ear cress).